A 196-amino-acid chain; its full sequence is uncharacterized protein (196 aa).

Residues 22–42 (MIIIPMALLVFILIIGSFFAI) form a helical membrane-spanning segment.

It localises to the cell membrane. This is an uncharacterized protein from Lactobacillus acidophilus (strain ATCC 700396 / NCK56 / N2 / NCFM).